The sequence spans 116 residues: Putative pterin-4-alpha-carbinolamine dehydratase (116 aa).

It belongs to the pterin-4-alpha-carbinolamine dehydratase family.

It catalyses the reaction (4aS,6R)-4a-hydroxy-L-erythro-5,6,7,8-tetrahydrobiopterin = (6R)-L-erythro-6,7-dihydrobiopterin + H2O. This is Putative pterin-4-alpha-carbinolamine dehydratase from Paracidovorax citrulli (strain AAC00-1) (Acidovorax citrulli).